The chain runs to 366 residues: Cytochrome c peroxidase, mitochondrial (366 aa).

Residue histidine 123 is the Proton acceptor of the active site. A compositionally biased stretch (basic and acidic residues) spans 195-206; that stretch reads IEWRPGRVDDNT. The interval 195–218 is disordered; it reads IEWRPGRVDDNTASKVPPNGRLPD. Histidine 247 contributes to the heme b binding site. The Tryptophan radical intermediate role is filled by tryptophan 263.

Belongs to the peroxidase family. Cytochrome c peroxidase subfamily. Forms a one-to-one complex with cytochrome c. The cofactor is heme b.

Its subcellular location is the mitochondrion matrix. The protein resides in the mitochondrion intermembrane space. It catalyses the reaction 2 Fe(II)-[cytochrome c] + H2O2 + 2 H(+) = 2 Fe(III)-[cytochrome c] + 2 H2O. Its function is as follows. Destroys radicals which are normally produced within the cells and which are toxic to biological systems. This chain is Cytochrome c peroxidase, mitochondrial (CCP1), found in Candida albicans (strain SC5314 / ATCC MYA-2876) (Yeast).